A 429-amino-acid polypeptide reads, in one-letter code: Histidine--tRNA ligase (429 aa).

Belongs to the class-II aminoacyl-tRNA synthetase family. In terms of assembly, homodimer.

It localises to the cytoplasm. It catalyses the reaction tRNA(His) + L-histidine + ATP = L-histidyl-tRNA(His) + AMP + diphosphate + H(+). This is Histidine--tRNA ligase from Pseudomonas aeruginosa (strain LESB58).